Here is a 305-residue protein sequence, read N- to C-terminus: 4-hydroxy-tetrahydrodipicolinate synthase 1 (305 aa).

Thr-53 is a pyruvate binding site. Tyr-141 acts as the Proton donor/acceptor in catalysis. Lys-169 serves as the catalytic Schiff-base intermediate with substrate. Val-209 contacts pyruvate.

This sequence belongs to the DapA family. Homotetramer; dimer of dimers.

It localises to the cytoplasm. It catalyses the reaction L-aspartate 4-semialdehyde + pyruvate = (2S,4S)-4-hydroxy-2,3,4,5-tetrahydrodipicolinate + H2O + H(+). The protein operates within amino-acid biosynthesis; L-lysine biosynthesis via DAP pathway; (S)-tetrahydrodipicolinate from L-aspartate: step 3/4. In terms of biological role, catalyzes the condensation of (S)-aspartate-beta-semialdehyde [(S)-ASA] and pyruvate to 4-hydroxy-tetrahydrodipicolinate (HTPA). The polypeptide is 4-hydroxy-tetrahydrodipicolinate synthase 1 (Streptomyces coelicolor (strain ATCC BAA-471 / A3(2) / M145)).